Here is a 273-residue protein sequence, read N- to C-terminus: Formamidopyrimidine-DNA glycosylase (273 aa).

Pro-2 acts as the Schiff-base intermediate with DNA in catalysis. Residue Glu-3 is the Proton donor of the active site. Lys-58 serves as the catalytic Proton donor; for beta-elimination activity. DNA contacts are provided by His-91, Arg-109, and Arg-154. An FPG-type zinc finger spans residues 239-273 (FCYARTGEPCRICKTPIRQIVQGQRSTFYCPNCQK). The Proton donor; for delta-elimination activity role is filled by Arg-263.

The protein belongs to the FPG family. In terms of assembly, monomer. Zn(2+) is required as a cofactor.

The enzyme catalyses Hydrolysis of DNA containing ring-opened 7-methylguanine residues, releasing 2,6-diamino-4-hydroxy-5-(N-methyl)formamidopyrimidine.. It carries out the reaction 2'-deoxyribonucleotide-(2'-deoxyribose 5'-phosphate)-2'-deoxyribonucleotide-DNA = a 3'-end 2'-deoxyribonucleotide-(2,3-dehydro-2,3-deoxyribose 5'-phosphate)-DNA + a 5'-end 5'-phospho-2'-deoxyribonucleoside-DNA + H(+). Its function is as follows. Involved in base excision repair of DNA damaged by oxidation or by mutagenic agents. Acts as a DNA glycosylase that recognizes and removes damaged bases. Has a preference for oxidized purines, such as 7,8-dihydro-8-oxoguanine (8-oxoG). Has AP (apurinic/apyrimidinic) lyase activity and introduces nicks in the DNA strand. Cleaves the DNA backbone by beta-delta elimination to generate a single-strand break at the site of the removed base with both 3'- and 5'-phosphates. The sequence is that of Formamidopyrimidine-DNA glycosylase from Janthinobacterium sp. (strain Marseille) (Minibacterium massiliensis).